A 128-amino-acid chain; its full sequence is Holo-[acyl-carrier-protein] synthase (128 aa).

2 residues coordinate Mg(2+): aspartate 7 and glutamate 55.

Belongs to the P-Pant transferase superfamily. AcpS family. It depends on Mg(2+) as a cofactor.

Its subcellular location is the cytoplasm. The catalysed reaction is apo-[ACP] + CoA = holo-[ACP] + adenosine 3',5'-bisphosphate + H(+). In terms of biological role, transfers the 4'-phosphopantetheine moiety from coenzyme A to a Ser of acyl-carrier-protein. The protein is Holo-[acyl-carrier-protein] synthase of Moorella thermoacetica (strain ATCC 39073 / JCM 9320).